The chain runs to 175 residues: Large ribosomal subunit protein uL16 (175 aa).

The protein belongs to the universal ribosomal protein uL16 family.

The polypeptide is Large ribosomal subunit protein uL16 (Caldivirga maquilingensis (strain ATCC 700844 / DSM 13496 / JCM 10307 / IC-167)).